Reading from the N-terminus, the 91-residue chain is Non-specific lipid-transfer protein P5 (91 aa).

Disulfide bonds link Cys3-Cys50, Cys13-Cys27, Cys28-Cys73, and Cys48-Cys87.

The protein localises to the secreted. Its function is as follows. Plant non-specific lipid-transfer proteins transfer phospholipids as well as galactolipids across membranes. May play a role in wax or cutin deposition in the cell walls of expanding epidermal cells and certain secretory tissues. The polypeptide is Non-specific lipid-transfer protein P5 (Vitis sp. (Grape)).